The primary structure comprises 308 residues: Methionyl-tRNA formyltransferase (308 aa).

107–110 (SLLP) contacts (6S)-5,6,7,8-tetrahydrofolate.

This sequence belongs to the Fmt family.

The catalysed reaction is L-methionyl-tRNA(fMet) + (6R)-10-formyltetrahydrofolate = N-formyl-L-methionyl-tRNA(fMet) + (6S)-5,6,7,8-tetrahydrofolate + H(+). Functionally, attaches a formyl group to the free amino group of methionyl-tRNA(fMet). The formyl group appears to play a dual role in the initiator identity of N-formylmethionyl-tRNA by promoting its recognition by IF2 and preventing the misappropriation of this tRNA by the elongation apparatus. This chain is Methionyl-tRNA formyltransferase, found in Carboxydothermus hydrogenoformans (strain ATCC BAA-161 / DSM 6008 / Z-2901).